The sequence spans 269 residues: Tropinone reductase homolog At2g29320 (269 aa).

19-43 serves as a coordination point for NADP(+); that stretch reads LVTGAASGIGYAIVEELAGFGAKIH. S152 contacts substrate. Y166 functions as the Proton acceptor in the catalytic mechanism.

Belongs to the short-chain dehydrogenases/reductases (SDR) family. SDR65C subfamily.

In Arabidopsis thaliana (Mouse-ear cress), this protein is Tropinone reductase homolog At2g29320.